A 580-amino-acid chain; its full sequence is M-phase inducer phosphatase 2 (580 aa).

Positions 1–24 are disordered; the sequence is MEVPQPEPAPGSALSPAGVCGGAQ. Ser-42 is subject to Phosphoserine. The span at 89-107 shows a compositional bias: low complexity; it reads SLSRRASESSLSSESSESS. 2 disordered regions span residues 89–117 and 165–196; these read SLSR…DSPS and NITN…ENDG. Phosphoserine; by MELK is present on Ser-169. Ser-249 is modified (phosphoserine). At Ser-323 the chain carries Phosphoserine; by MELK and MAPK14. The disordered stretch occupies residues 331 to 370; it reads PILKRLERPQDRDTPVQNKRRRSVTPPEEQQEAEEPKARV. Residues 334-344 show a composition bias toward basic and acidic residues; that stretch reads KRLERPQDRDT. Residue Ser-353 is modified to Phosphoserine; by AURKA. Ser-375 carries the phosphoserine; by BRSK1 and MAPK14 modification. In terms of domain architecture, Rhodanese spans 431–538; that stretch reads IVDKFVIVDC…FFPQHPNFCE (108 aa). Ser-470 carries the phosphoserine modification. Cys-487 is a catalytic residue. Ser-563 is subject to Phosphoserine.

This sequence belongs to the MPI phosphatase family. In terms of assembly, interacts with MAPK14 and 14-3-3 proteins. In terms of processing, phosphorylated by BRSK1 in vitro. Phosphorylated by CHEK1, which inhibits the activity of this protein. Phosphorylation at Ser-353 by AURKA might locally participate in the control of the onset of mitosis. Phosphorylation by MELK at Ser-169 promotes localization to the centrosome and the spindle poles during mitosis. Phosphorylation at Ser-323 and Ser-375 by MAPK14 is required for binding to 14-3-3 proteins.

It is found in the cytoplasm. The protein resides in the cytoskeleton. Its subcellular location is the microtubule organizing center. The protein localises to the centrosome. It localises to the spindle pole. It catalyses the reaction O-phospho-L-tyrosyl-[protein] + H2O = L-tyrosyl-[protein] + phosphate. Stimulated by B-type cyclins. Its function is as follows. Tyrosine protein phosphatase which functions as a dosage-dependent inducer of mitotic progression. Directly dephosphorylates CDK1 and stimulates its kinase activity. Required for G2/M phases of the cell cycle progression and abscission during cytokinesis in a ECT2-dependent manner. The three isoforms seem to have a different level of activity. The polypeptide is M-phase inducer phosphatase 2 (CDC25B) (Homo sapiens (Human)).